Here is a 448-residue protein sequence, read N- to C-terminus: Serine--tRNA ligase (448 aa).

Residue 246–248 (TAE) coordinates L-serine. ATP is bound by residues 277–279 (RKE) and valine 293. Glutamate 300 is a binding site for L-serine. 364–367 (ELAS) serves as a coordination point for ATP. An L-serine-binding site is contributed by threonine 399.

Belongs to the class-II aminoacyl-tRNA synthetase family. Type-1 seryl-tRNA synthetase subfamily. Homodimer. The tRNA molecule binds across the dimer.

Its subcellular location is the cytoplasm. The enzyme catalyses tRNA(Ser) + L-serine + ATP = L-seryl-tRNA(Ser) + AMP + diphosphate + H(+). It carries out the reaction tRNA(Sec) + L-serine + ATP = L-seryl-tRNA(Sec) + AMP + diphosphate + H(+). The protein operates within aminoacyl-tRNA biosynthesis; selenocysteinyl-tRNA(Sec) biosynthesis; L-seryl-tRNA(Sec) from L-serine and tRNA(Sec): step 1/1. Its function is as follows. Catalyzes the attachment of serine to tRNA(Ser). Is also able to aminoacylate tRNA(Sec) with serine, to form the misacylated tRNA L-seryl-tRNA(Sec), which will be further converted into selenocysteinyl-tRNA(Sec). This Pyrobaculum islandicum (strain DSM 4184 / JCM 9189 / GEO3) protein is Serine--tRNA ligase.